A 947-amino-acid chain; its full sequence is Cell adhesion molecule CEACAM5 (947 aa).

Positions 1-34 (MEASSVLPCKWCTHLQGLLLTASFLTCCHLPTTA) are cleaved as a signal peptide. Ig-like V-type domains are found at residues 35-132 (QITI…EIVS), 166-259 (SEGG…VQLY), 270-378 (PLQV…LHVN), 392-498 (RLSI…LQLD), 509-615 (QVKI…LHVN), 642-733 (GESV…VQLQ), and 746-851 (DQLI…VQVH). Asn57, Asn103, Asn110, Asn207, Asn224, Asn341, Asn461, Asn472, Asn578, Asn698, Asn709, Asn816, and Asn823 each carry an N-linked (GlcNAc...) asparagine glycan. One can recognise an Ig-like C2-type 1 domain in the interval 859–943 (PFVRVTDTTV…SKSSLPVRLA (85 aa)). The cysteines at positions 878 and 926 are disulfide-linked.

The protein belongs to the immunoglobulin superfamily. CEA family. Homodimer.

It is found in the cell membrane. Its subcellular location is the apical cell membrane. It localises to the cell surface. In terms of biological role, cell surface glycoprotein that plays a role in cell adhesion, intracellular signaling and tumor progression. Mediates homophilic and heterophilic cell adhesion with other carcinoembryonic antigen-related cell adhesion molecules, such as CEACAM6. Plays a role as an oncogene by promoting tumor progression; induces resistance to anoikis of colorectal carcinoma cells. The polypeptide is Cell adhesion molecule CEACAM5 (Mus musculus (Mouse)).